We begin with the raw amino-acid sequence, 375 residues long: Holliday junction branch migration complex subunit RuvB (375 aa).

Residues 1 to 50 (MAIVSSKSPDPAERRSQAKTKPSVSEPQDSLVRPQAAPEESQRPEDQIRP) are disordered. The interval 13–209 (ERRSQAKTKP…FGLVQRLRFY (197 aa)) is large ATPase domain (RuvB-L). The segment covering 19–28 (KTKPSVSEPQ) has biased composition (polar residues). A compositionally biased stretch (basic and acidic residues) spans 40–49 (ESQRPEDQIR). Residues isoleucine 48, arginine 49, glycine 90, lysine 93, threonine 94, threonine 95, 156-158 (EDF), arginine 199, tyrosine 209, and arginine 246 contribute to the ATP site. Threonine 94 lines the Mg(2+) pocket. Positions 210-280 (EVEALTDIVQ…IAATALELYN (71 aa)) are small ATPAse domain (RuvB-S). The interval 283-375 (PCGLDWTDRR…LQQLLTEPET (93 aa)) is head domain (RuvB-H). Positions 338 and 343 each coordinate DNA.

It belongs to the RuvB family. As to quaternary structure, homohexamer. Forms an RuvA(8)-RuvB(12)-Holliday junction (HJ) complex. HJ DNA is sandwiched between 2 RuvA tetramers; dsDNA enters through RuvA and exits via RuvB. An RuvB hexamer assembles on each DNA strand where it exits the tetramer. Each RuvB hexamer is contacted by two RuvA subunits (via domain III) on 2 adjacent RuvB subunits; this complex drives branch migration. In the full resolvosome a probable DNA-RuvA(4)-RuvB(12)-RuvC(2) complex forms which resolves the HJ.

The protein localises to the cytoplasm. It catalyses the reaction ATP + H2O = ADP + phosphate + H(+). Functionally, the RuvA-RuvB-RuvC complex processes Holliday junction (HJ) DNA during genetic recombination and DNA repair, while the RuvA-RuvB complex plays an important role in the rescue of blocked DNA replication forks via replication fork reversal (RFR). RuvA specifically binds to HJ cruciform DNA, conferring on it an open structure. The RuvB hexamer acts as an ATP-dependent pump, pulling dsDNA into and through the RuvAB complex. RuvB forms 2 homohexamers on either side of HJ DNA bound by 1 or 2 RuvA tetramers; 4 subunits per hexamer contact DNA at a time. Coordinated motions by a converter formed by DNA-disengaged RuvB subunits stimulates ATP hydrolysis and nucleotide exchange. Immobilization of the converter enables RuvB to convert the ATP-contained energy into a lever motion, pulling 2 nucleotides of DNA out of the RuvA tetramer per ATP hydrolyzed, thus driving DNA branch migration. The RuvB motors rotate together with the DNA substrate, which together with the progressing nucleotide cycle form the mechanistic basis for DNA recombination by continuous HJ branch migration. Branch migration allows RuvC to scan DNA until it finds its consensus sequence, where it cleaves and resolves cruciform DNA. The polypeptide is Holliday junction branch migration complex subunit RuvB (Synechococcus elongatus (strain ATCC 33912 / PCC 7942 / FACHB-805) (Anacystis nidulans R2)).